The chain runs to 958 residues: MQSKSIKIQGARTHNLKDIDIDIPKNKLVVLTGLSGSGKSSLAFDTIYAEGQRRYVESLSSYARQFLGQMDKPDVDVIEGLSPAISIDQKTTSKNPRSTVGTVTEIYDYLRLLYARVGRPTCPNHGIEISSQTVQQMVDRILEYPERTKLQILAPVVSGRKGEHVKILENLKQEGYVRIRVDNEMREVTDDIQLEKNKKHSIEVVIDRIVVKDGVASRLSDSIETALKLGEGNIIVDVIGEEELTFSENHACPICGFSIGELEPRLFSFNSPFGACPSCDGLGTKLEVDIDLVIPDWEKTLNENAIAPWEPISSQYYPQLLKSVCNHFGIDMDIPVKEIPQQQMDIILQGSGKEKIKFEYENDFGSIRRSEAPFEGVLKNVARRYRETSSDFIRETLEKYMAQKNCPTCKGHRLKKEALAVLINGKHISNVTDYSIVESIQLFQQLDLTEKEQQIARLILKEIDNRLEFLNNVGLDYLTLSRTAGTLSGGEAQRIRLATQIGSALTGVLYVLDEPSIGLHQRDNDRLIDTLKRMRDLDNTLIVVEHDEDTMLAADWLVDIGPGAGEHGGEIVASDTPQNVMKNEQSLTGKYLSGKEFIPLPTKRRKPNKRKIEVMGASENNLKNVSAKIPIGLMTVVTGVSGSGKSTLVNEIVYKSLAKSLYKGKVKPGKHKKIKGIEHIDKVIDIDQSPIGRTPRSNPATYTGVFDDIRDVFAQTNEAKVRGYKKGRFSFNVKGGRCEACRGDGILKIEMHFLPDVYVPCEVCHGARYNRETLEVKYKGKNISEVLELRIEEALEFFSAIPKIKRKLQTVYDVGLGYIRLGQPATTLSGGEAQRVKLASELHKRSTGKSFYILDEPTTGLHVDDIRRLLSVLQRIADNGDSVLIIEHNLDVIKSADHIIDLGPEGGDRGGQIIATGTPEQIAEQQDVSYTGKYLSPVLDRDKQRMEETLEAKTVSRS.

One can recognise an ABC transporter 1 domain in the interval 1 to 232 (MQSKSIKIQG…IETALKLGEG (232 aa)). ATP is bound at residue 33–40 (GLSGSGKS). The segment at 252 to 279 (CPICGFSIGELEPRLFSFNSPFGACPSC) adopts a C4-type zinc-finger fold. ABC transporter domains lie at 315–593 (QYYP…KYLS) and 604–935 (RRKP…GKYL). 639-646 (GVSGSGKS) serves as a coordination point for ATP. A C4-type zinc finger spans residues 738–764 (CEACRGDGILKIEMHFLPDVYVPCEVC).

The protein belongs to the ABC transporter superfamily. UvrA family. In terms of assembly, forms a heterotetramer with UvrB during the search for lesions.

The protein resides in the cytoplasm. The UvrABC repair system catalyzes the recognition and processing of DNA lesions. UvrA is an ATPase and a DNA-binding protein. A damage recognition complex composed of 2 UvrA and 2 UvrB subunits scans DNA for abnormalities. When the presence of a lesion has been verified by UvrB, the UvrA molecules dissociate. This is UvrABC system protein A from Oceanobacillus iheyensis (strain DSM 14371 / CIP 107618 / JCM 11309 / KCTC 3954 / HTE831).